The chain runs to 83 residues: ATP synthase subunit c (83 aa).

Helical transmembrane passes span 10 to 30 (IAVA…FGLL) and 52 to 72 (MFIV…IALF).

Belongs to the ATPase C chain family. As to quaternary structure, F-type ATPases have 2 components, F(1) - the catalytic core - and F(0) - the membrane proton channel. F(1) has five subunits: alpha(3), beta(3), gamma(1), delta(1), epsilon(1). F(0) has three main subunits: a(1), b(2) and c(10-14). The alpha and beta chains form an alternating ring which encloses part of the gamma chain. F(1) is attached to F(0) by a central stalk formed by the gamma and epsilon chains, while a peripheral stalk is formed by the delta and b chains.

The protein localises to the cell inner membrane. Its function is as follows. F(1)F(0) ATP synthase produces ATP from ADP in the presence of a proton or sodium gradient. F-type ATPases consist of two structural domains, F(1) containing the extramembraneous catalytic core and F(0) containing the membrane proton channel, linked together by a central stalk and a peripheral stalk. During catalysis, ATP synthesis in the catalytic domain of F(1) is coupled via a rotary mechanism of the central stalk subunits to proton translocation. Functionally, key component of the F(0) channel; it plays a direct role in translocation across the membrane. A homomeric c-ring of between 10-14 subunits forms the central stalk rotor element with the F(1) delta and epsilon subunits. The sequence is that of ATP synthase subunit c from Shewanella loihica (strain ATCC BAA-1088 / PV-4).